Reading from the N-terminus, the 862-residue chain is Rab GTPase-binding effector protein 1 (862 aa).

Ala2 bears the N-acetylalanine mark. Residues Asp11–Lys345 are a coiled coil. Position 282 is an N6-acetyllysine (Lys282). Residues Glu315–Ser374 form a disordered region. Positions Lys336–Lys345 are enriched in basic and acidic residues. Residues Ser374, Ser377, and Ser407 each carry the phosphoserine modification. Thr408 is subject to Phosphothreonine. Ser410 carries the phosphoserine modification. A coiled-coil region spans residues Asp534–Gln816.

It belongs to the rabaptin family. In terms of assembly, heterodimer with RABGEF1. The heterodimer binds RAB4A and RAB5A that have been activated by GTP-binding. Interacts with TSC2. Interacts with GGA1 (via GAE domain), GGA2 (via GAE domain) and GGA3 (via GAE domain). Interacts with AP1G1 (via GAE domain). Interacts with AP1G2 (via GAE domain). Interacts with ECPAS. Interacts with KCNH1. Interacts with PKD1 (via C-terminal domain) and GGA1; the interactions recruit PKD1:PKD2 complex to GGA1 and ARL3 at trans-Golgi network. Interacts with KCNH1. In terms of processing, proteolytic cleavage by caspases in apoptotic cells causes loss of endosome fusion activity.

The protein resides in the cytoplasm. The protein localises to the early endosome. It localises to the recycling endosome. Its subcellular location is the cytoplasmic vesicle. In terms of biological role, rab effector protein acting as linker between gamma-adaptin, RAB4A and RAB5A. Involved in endocytic membrane fusion and membrane trafficking of recycling endosomes. Involved in KCNH1 channels trafficking to and from the cell membrane. Stimulates RABGEF1 mediated nucleotide exchange on RAB5A. Mediates the traffic of PKD1:PKD2 complex from the endoplasmic reticulum through the Golgi to the cilium. This is Rab GTPase-binding effector protein 1 (Rabep1) from Mus musculus (Mouse).